A 437-amino-acid chain; its full sequence is 3-phosphoshikimate 1-carboxyvinyltransferase (437 aa).

3-phosphoshikimate contacts are provided by Lys-26, Ser-27, and Arg-31. Residue Lys-26 coordinates phosphoenolpyruvate. Gly-99 and Arg-127 together coordinate phosphoenolpyruvate. Residues Ser-172, Gln-174, Asp-320, and Lys-347 each coordinate 3-phosphoshikimate. Gln-174 contacts phosphoenolpyruvate. The active-site Proton acceptor is Asp-320. Residues Arg-351 and Arg-392 each coordinate phosphoenolpyruvate.

It belongs to the EPSP synthase family. Monomer.

The protein resides in the cytoplasm. The catalysed reaction is 3-phosphoshikimate + phosphoenolpyruvate = 5-O-(1-carboxyvinyl)-3-phosphoshikimate + phosphate. It functions in the pathway metabolic intermediate biosynthesis; chorismate biosynthesis; chorismate from D-erythrose 4-phosphate and phosphoenolpyruvate: step 6/7. In terms of biological role, catalyzes the transfer of the enolpyruvyl moiety of phosphoenolpyruvate (PEP) to the 5-hydroxyl of shikimate-3-phosphate (S3P) to produce enolpyruvyl shikimate-3-phosphate and inorganic phosphate. This is 3-phosphoshikimate 1-carboxyvinyltransferase from Methylococcus capsulatus (strain ATCC 33009 / NCIMB 11132 / Bath).